The primary structure comprises 1041 residues: MTDNAYPKLAGGAPDLPALELEVLDYWSRDDTFRASIARRDGAPEYVFYDGPPFANGLPHYGHLLTGYVKDIVPRYRTMRGYKVERRFGWDTHGLPAELEVERQLGITDKSQIEAMGIAAFNDACRASVLRYTDEWQAYVTRQARWVDFDNDYKTLDLAYMESVIWAFKQLWDKGLAYEGYRVLPYCWRDETPLSNHELRMDDDVYQSRQDPAVTVGFKVVGGQPDNGLDGAYLLVWTTTPWTLPSNLAVAVSPDITYVQVQAGDRRFVLAEARLAAYARELGEEPVVLGTYRGAELLGTRYLPPFAYFMDWPNAFQVLAGDFVTTDDGTGIVHMAPAYGEDDMVVAEAVGIAPVTPVDSKGRFDVTVADYQGQHVFDANAQIVRDLKTQSGPAAVNGPVLIRHETYEHPYPHCWRCRNPLIYRSVSSWFVRVTDFRDRMVELNQQITWYPEHVKDGQFGKWLQGARDWSISRNRYWGTPIPVWKSDDPAYPRIDVYGSLDELERDFGVRPANLHRPYIDELTRPNPDDPTGRSTMRRIPDVLDVWFDSGSMPYAQVHYPFENLDWFQGHYPGDFIVEYIGQTRGWFYTLHVLATALFDRPAFKTCVAHGIVLGFDGQKMSKSLRNYPDVTEVFDRDGSDAMRWFLMASPILRGGNLIVTEQGIRDGVRQVLLPLWNTYSFLALYAPKVGTWRVDSVHVLDRYILAKLAVLRDDLSESMEVYDIPGACEHLRQFTEALTNWYVRRSRSRFWAEDADAIDTLHTVLEVTTRLAAPLLPLITEIIWRGLTRERSVHLTDWPAPDLLPSDADLVAAMDQVRDVCSAASSLRKAKKLRVRLPLPKLIVAVENPQLLRPFVDLIGDELNVKQVELTDAIDTYGRFELTVNARVAGPRLGKDVQAAIKAVKAGDGVINPDGTLLAGPAVLTPDEYNSRLVAADPESTAALPDGAGLVVLDGTVTAELEAEGWAKDRIRELQELRKSTGLDVSDRIRVVMSVPAEREDWARTHRDLIAGEILATDFEFADLADGVAIGDGVRVSIEKT.

A 'HIGH' region motif is present at residues 53-63 (PFANGLPHYGH). Residues 619–623 (KMSKS) carry the 'KMSKS' region motif. Lys622 is a binding site for ATP.

Belongs to the class-I aminoacyl-tRNA synthetase family. IleS type 2 subfamily. Monomer. The cofactor is Zn(2+).

The protein localises to the cytoplasm. The enzyme catalyses tRNA(Ile) + L-isoleucine + ATP = L-isoleucyl-tRNA(Ile) + AMP + diphosphate. Catalyzes the attachment of isoleucine to tRNA(Ile). As IleRS can inadvertently accommodate and process structurally similar amino acids such as valine, to avoid such errors it has two additional distinct tRNA(Ile)-dependent editing activities. One activity is designated as 'pretransfer' editing and involves the hydrolysis of activated Val-AMP. The other activity is designated 'posttransfer' editing and involves deacylation of mischarged Val-tRNA(Ile). This Mycobacterium tuberculosis (strain CDC 1551 / Oshkosh) protein is Isoleucine--tRNA ligase (ileS).